The sequence spans 226 residues: Prolactin (226 aa).

A signal peptide spans 1-29 (MNSQGSAQKAGTLLLLLISNLLFCQNVQP). An intrachain disulfide couples cysteine 33 to cysteine 38. Phosphoserine occurs at positions 53 and 117. 2 cysteine pairs are disulfide-bonded: cysteine 85-cysteine 201 and cysteine 218-cysteine 226.

This sequence belongs to the somatotropin/prolactin family. In terms of assembly, interacts with PRLR.

It localises to the secreted. Its function is as follows. Prolactin acts primarily on the mammary gland by promoting lactation. This chain is Prolactin (Prl), found in Mus musculus (Mouse).